The following is a 260-amino-acid chain: MGLSIHSLRKLKERAQPIVALTATEYAMARILDQAGVDLLLVGDSLSMVALGHTSTLPVTVDELLHHCRAVRRGVERALLVADLPFGSYEQSPQQAFSTATRFLKEAGVQAVKLEGGYPRMTETVAFLTESGIPVLGHLGLTPQAVHQLGGYRVQGKTAQAAERLIDQALALEGAGAFALVLEHIPYDLAGEISGKLVIPTVGIGAGPHCNGQILVTHDLLGLTENPPPFVNPYADLRALISKAVGRYSADVRAHGSREE.

Residues aspartate 44 and aspartate 83 each contribute to the Mg(2+) site. Residues aspartate 44–serine 45, aspartate 83, and lysine 113 contribute to the 3-methyl-2-oxobutanoate site. A Mg(2+)-binding site is contributed by glutamate 115. The active-site Proton acceptor is glutamate 183.

This sequence belongs to the PanB family. Homodecamer; pentamer of dimers. Mg(2+) serves as cofactor.

Its subcellular location is the cytoplasm. The catalysed reaction is 3-methyl-2-oxobutanoate + (6R)-5,10-methylene-5,6,7,8-tetrahydrofolate + H2O = 2-dehydropantoate + (6S)-5,6,7,8-tetrahydrofolate. It functions in the pathway cofactor biosynthesis; (R)-pantothenate biosynthesis; (R)-pantoate from 3-methyl-2-oxobutanoate: step 1/2. In terms of biological role, catalyzes the reversible reaction in which hydroxymethyl group from 5,10-methylenetetrahydrofolate is transferred onto alpha-ketoisovalerate to form ketopantoate. This chain is 3-methyl-2-oxobutanoate hydroxymethyltransferase, found in Gloeobacter violaceus (strain ATCC 29082 / PCC 7421).